The sequence spans 193 residues: MKVIGISGSPRPEGNTTLLVREALNAIAEEGIETEFISLADKELNPCIGCNMCKEEGKCPIIDDVDEILKKMKEADGIILGSPVYFGGVSAQLKMLMDRSRPLRIGFQLRNKVGGAVAVGASRNGGQETTIQQIHNFFLIHSMIVVGDNDPTAHYGGTGVGKAPGDCKNDDIGLETARNLGKKVAEVVKLIKK.

Cys-47, Cys-50, Cys-53, and Cys-59 together coordinate [4Fe-4S] cluster.

This sequence belongs to the SsuE family. Isf subfamily. In terms of assembly, homodimer. It depends on FMN as a cofactor. [4Fe-4S] cluster is required as a cofactor.

In terms of biological role, redox-active protein probably involved in electron transport. The polypeptide is Iron-sulfur flavoprotein MJ1083 (Methanocaldococcus jannaschii (strain ATCC 43067 / DSM 2661 / JAL-1 / JCM 10045 / NBRC 100440) (Methanococcus jannaschii)).